A 100-amino-acid chain; its full sequence is Urease subunit gamma (100 aa).

The protein belongs to the urease gamma subunit family. As to quaternary structure, heterotrimer of UreA (gamma), UreB (beta) and UreC (alpha) subunits. Three heterotrimers associate to form the active enzyme.

The protein localises to the cytoplasm. The catalysed reaction is urea + 2 H2O + H(+) = hydrogencarbonate + 2 NH4(+). It participates in nitrogen metabolism; urea degradation; CO(2) and NH(3) from urea (urease route): step 1/1. This Burkholderia ambifaria (strain MC40-6) protein is Urease subunit gamma.